A 185-amino-acid chain; its full sequence is Ribosome-recycling factor (185 aa).

Belongs to the RRF family.

It is found in the cytoplasm. Functionally, responsible for the release of ribosomes from messenger RNA at the termination of protein biosynthesis. May increase the efficiency of translation by recycling ribosomes from one round of translation to another. The chain is Ribosome-recycling factor from Bacillus cereus (strain ATCC 10987 / NRS 248).